Reading from the N-terminus, the 446-residue chain is N-succinylarginine dihydrolase (446 aa).

Substrate contacts are provided by residues 19 to 28 (AGLSYGNVAS), asparagine 110, and 137 to 138 (HR). Glutamate 174 is an active-site residue. Arginine 214 serves as a coordination point for substrate. Histidine 250 is an active-site residue. The substrate site is built by aspartate 252 and asparagine 363. Catalysis depends on cysteine 369, which acts as the Nucleophile.

This sequence belongs to the succinylarginine dihydrolase family. In terms of assembly, homodimer.

It carries out the reaction N(2)-succinyl-L-arginine + 2 H2O + 2 H(+) = N(2)-succinyl-L-ornithine + 2 NH4(+) + CO2. The protein operates within amino-acid degradation; L-arginine degradation via AST pathway; L-glutamate and succinate from L-arginine: step 2/5. Its function is as follows. Catalyzes the hydrolysis of N(2)-succinylarginine into N(2)-succinylornithine, ammonia and CO(2). The sequence is that of N-succinylarginine dihydrolase from Pseudoalteromonas atlantica (strain T6c / ATCC BAA-1087).